An 81-amino-acid polypeptide reads, in one-letter code: Carboxysome shell vertex protein CsoS4B (81 aa).

The 77-residue stretch at 1–77 (MEVMRVRSDL…TDLTIGGIID (77 aa)) folds into the BMV domain.

It belongs to the CcmL/EutN family. CsoS4 subfamily. In terms of assembly, homopentamer.

It localises to the carboxysome. Its function is as follows. Probably forms vertices in the carboxysome. Has been modeled to induce curvature upon insertion into an otherwise flat hexagonal layer of major carboxysome subunits. A minor shell protein, only 12 pentamers of CsoS4A/CsoS4B are calculated to be present in each carboxysome. The 2 CsoS4 proteins contribute to the impermeability of the carboxysome to CO(2). Its central pore is probably too small to allow passage of metabolites; its function might be to anchor different proteins or metabolites to the carboxysome. In terms of biological role, unlike beta-carboxysomes, alpha-carboxysomes (Cb) can form without cargo protein. CsoS2 is essential for Cb formation and is also capable of targeting foreign proteins to the Cb. The Cb shell assembles with the aid of CsoS2; CsoS1A, CsoS1B and CsoS1C form the majority of the shell while CsoS4A and CsoS4B form vertices. CsoS1D forms pseudohexamers that probably control metabolite flux into and out of the shell. The protein is Carboxysome shell vertex protein CsoS4B of Halothiobacillus neapolitanus (strain ATCC 23641 / c2) (Thiobacillus neapolitanus).